We begin with the raw amino-acid sequence, 323 residues long: Delta-aminolevulinic acid dehydratase (323 aa).

Residues Cys118, Cys120, and Cys128 each coordinate Zn(2+). Catalysis depends on Lys195, which acts as the Schiff-base intermediate with substrate. Residues Arg205 and Arg217 each contribute to the 5-aminolevulinate site. Glu233 is a binding site for Mg(2+). The active-site Schiff-base intermediate with substrate is Lys248. Positions 274 and 313 each coordinate 5-aminolevulinate.

This sequence belongs to the ALAD family. Homooctamer. Requires Zn(2+) as cofactor.

The enzyme catalyses 2 5-aminolevulinate = porphobilinogen + 2 H2O + H(+). Its pathway is porphyrin-containing compound metabolism; protoporphyrin-IX biosynthesis; coproporphyrinogen-III from 5-aminolevulinate: step 1/4. In terms of biological role, catalyzes an early step in the biosynthesis of tetrapyrroles. Binds two molecules of 5-aminolevulinate per subunit, each at a distinct site, and catalyzes their condensation to form porphobilinogen. This Staphylococcus aureus protein is Delta-aminolevulinic acid dehydratase (hemB).